The chain runs to 295 residues: SPX domain-containing protein 1 (295 aa).

Residues 1-166 form the SPX domain; it reads MKFGKSLSSQ…GALIRLPFIQ (166 aa). The segment at 199-227 is disordered; the sequence is LSVSSEDGRGDSTNEDKPSNPSSSLVNGG. Basic and acidic residues predominate over residues 204–216; that stretch reads EDGRGDSTNEDKP.

Interacts (via SPX domain) with PHR2 (via C-terminus). Interacts with RLI1 in the nucleus to prevents its positive regulation of leaf inclination during phosphate (Pi) starvation. As to expression, predominantly expressed in roots and leaves. Localized in leaves lamina joints.

It localises to the nucleus. In terms of biological role, involved in plant adaptation to phosphate (Pi) starvation. Inhibits PHR2 DNA-binding activity via a Pi-dependent protein interaction. Suppresses the regulation on expression of PT2 by PHR2 and accumulation of shoot Pi. Optimizes growth under phosphate-limited conditions through a negative feedback loop of the PSI (phosphate starvation-induced) signaling pathway. Regulates the expression of SPX2, SPX3 and SPX5. May be an important link between signal transduction pathways related to phosphate starvation and cold stress. Together with SPX2, plays a negative role in the regulation of leaf inclination by preventing RLI1 transcription factor activity in Pi depleted conditions. In Oryza sativa subsp. japonica (Rice), this protein is SPX domain-containing protein 1.